The primary structure comprises 292 residues: S-methyl-5'-thioadenosine phosphorylase (292 aa).

Phosphate is bound by residues S11, 53–54 (RH), and 86–87 (SA). M184 contributes to the substrate binding site. T185 contributes to the phosphate binding site. 208–210 (DYD) is a substrate binding site.

This sequence belongs to the PNP/MTAP phosphorylase family. MTAP subfamily. As to quaternary structure, homohexamer. Dimer of a homotrimer.

The enzyme catalyses S-methyl-5'-thioadenosine + phosphate = 5-(methylsulfanyl)-alpha-D-ribose 1-phosphate + adenine. Its pathway is amino-acid biosynthesis; L-methionine biosynthesis via salvage pathway; S-methyl-5-thio-alpha-D-ribose 1-phosphate from S-methyl-5'-thioadenosine (phosphorylase route): step 1/1. Its function is as follows. Catalyzes the reversible phosphorylation of S-methyl-5'-thioadenosine (MTA) to adenine and 5-methylthioribose-1-phosphate. Involved in the breakdown of MTA, a major by-product of polyamine biosynthesis. Responsible for the first step in the methionine salvage pathway after MTA has been generated from S-adenosylmethionine. Has broad substrate specificity with 6-aminopurine nucleosides as preferred substrates. The chain is S-methyl-5'-thioadenosine phosphorylase from Koribacter versatilis (strain Ellin345).